A 505-amino-acid polypeptide reads, in one-letter code: MEAFVPGGAGAAAAAVGGFVAAAALAERAGVIAPRKRPNAPPAVPGLPIIGNLHQLKEKKPHQTFAKWAEIYGPIYTIRTGASSVVVLNSTEVAKEAMVAKFSSISTRKLSKALTVLTRDKSMVATSDYCDFHKMVKRYVMSSMLGTSAQKQFRDIRDMMIHNMLSTFHKLVKDDPHAPLIFRDVFKDELFRLSMIQSLGEDVSSVYVDEFGRDISKEEIYNATVTDMMMCAIEVDWRDFFPYLSWVPNKSFETRVFTTETRRTAVMRALIKQQKERIVRGEAKTCYLDFLLAENTLTDEQLMMLVWEALIEAADTTLVTTEWAMYELAKNPDKQERLYQEIREVCGDETVTEEHLPRLPYLNAVFHETLRRHSPVPLIPPRFVHEDTKLAGYDVPAGTEMVINLYGCNMNRKEWESPEEWVPERFAGGRLEVADMYKTMAFGAGRRACAGSLQATHIACAAVARFVQEFGWRLREGDEEKVDTVQLTAYKLHPLHVHLTRRGRM.

A helical membrane pass occupies residues 3 to 23 (AFVPGGAGAAAAAVGGFVAAA). Cys-449 is a heme binding site.

It belongs to the cytochrome P450 family. Heme serves as cofactor. In terms of tissue distribution, widely expressed.

It localises to the membrane. The catalysed reaction is ent-kaur-16-ene + 3 reduced [NADPH--hemoprotein reductase] + 3 O2 = ent-kaur-16-en-19-oate + 3 oxidized [NADPH--hemoprotein reductase] + 4 H2O + 4 H(+). Its pathway is plant hormone biosynthesis; gibberellin biosynthesis. Functionally, catalyzes three successive oxidations of the 4-methyl group of ent-kaurene giving kaurenoic acid, a key step in gibberellins (GAs) biosynthesis. GAs, which are involved many processes, including stem elongation, play a central role in plant development. The protein is Ent-kaurene oxidase 2 of Oryza sativa subsp. japonica (Rice).